A 129-amino-acid chain; its full sequence is Protein Turandot B2 (129 aa).

The first 21 residues, 1–21 (MNSATSLMCFALLLISPLCMG), serve as a signal peptide directing secretion.

The protein belongs to the Turandot family.

Its subcellular location is the secreted. Its function is as follows. A humoral factor that may play a role in stress tolerance. The protein is Protein Turandot B2 (TotB2) of Drosophila erecta (Fruit fly).